Reading from the N-terminus, the 139-residue chain is D-ribose pyranase (139 aa).

The Proton donor role is filled by His-20. Substrate contacts are provided by residues Asp-28, His-106, and 128–130 (YAN).

Belongs to the RbsD / FucU family. RbsD subfamily. In terms of assembly, homodecamer.

It localises to the cytoplasm. It carries out the reaction beta-D-ribopyranose = beta-D-ribofuranose. It participates in carbohydrate metabolism; D-ribose degradation; D-ribose 5-phosphate from beta-D-ribopyranose: step 1/2. Its function is as follows. Catalyzes the interconversion of beta-pyran and beta-furan forms of D-ribose. This is D-ribose pyranase from Cronobacter sakazakii (strain ATCC BAA-894) (Enterobacter sakazakii).